The primary structure comprises 215 residues: Cytochrome b6 (215 aa).

The helical transmembrane segment at 32-52 threads the bilayer; sequence IFYCLGGITLTCFLIQFATGF. C35 lines the heme c pocket. H86 and H100 together coordinate heme b. Helical transmembrane passes span 90 to 110, 116 to 136, and 186 to 206; these read ASMM…TGGF, LTWV…VTGY, and LHTF…FLMI. Residues H187 and H202 each contribute to the heme b site.

Belongs to the cytochrome b family. PetB subfamily. The 4 large subunits of the cytochrome b6-f complex are cytochrome b6, subunit IV (17 kDa polypeptide, PetD), cytochrome f and the Rieske protein, while the 4 small subunits are PetG, PetL, PetM and PetN. The complex functions as a dimer. Requires heme b as cofactor. Heme c serves as cofactor.

Its subcellular location is the cellular thylakoid membrane. Functionally, component of the cytochrome b6-f complex, which mediates electron transfer between photosystem II (PSII) and photosystem I (PSI), cyclic electron flow around PSI, and state transitions. This chain is Cytochrome b6, found in Synechococcus elongatus (strain ATCC 33912 / PCC 7942 / FACHB-805) (Anacystis nidulans R2).